The primary structure comprises 242 residues: Biosynthetic peptidoglycan transglycosylase (242 aa).

Residues 19–39 (LMVVLAVFWAGGIALFSVAPV) form a helical membrane-spanning segment.

Belongs to the glycosyltransferase 51 family.

It localises to the cell inner membrane. It carries out the reaction [GlcNAc-(1-&gt;4)-Mur2Ac(oyl-L-Ala-gamma-D-Glu-L-Lys-D-Ala-D-Ala)](n)-di-trans,octa-cis-undecaprenyl diphosphate + beta-D-GlcNAc-(1-&gt;4)-Mur2Ac(oyl-L-Ala-gamma-D-Glu-L-Lys-D-Ala-D-Ala)-di-trans,octa-cis-undecaprenyl diphosphate = [GlcNAc-(1-&gt;4)-Mur2Ac(oyl-L-Ala-gamma-D-Glu-L-Lys-D-Ala-D-Ala)](n+1)-di-trans,octa-cis-undecaprenyl diphosphate + di-trans,octa-cis-undecaprenyl diphosphate + H(+). Its pathway is cell wall biogenesis; peptidoglycan biosynthesis. Functionally, peptidoglycan polymerase that catalyzes glycan chain elongation from lipid-linked precursors. This is Biosynthetic peptidoglycan transglycosylase from Shigella boydii serotype 4 (strain Sb227).